We begin with the raw amino-acid sequence, 396 residues long: Tyrosine--tRNA ligase (396 aa).

Positions 42-51 (PTAPDIHLGH) match the 'HIGH' region motif. Positions 226–230 (KMSKS) match the 'KMSKS' region motif. An ATP-binding site is contributed by K229. The S4 RNA-binding domain maps to 334–395 (LPIANLLKEA…GKRKFAKIII (62 aa)).

The protein belongs to the class-I aminoacyl-tRNA synthetase family. TyrS type 2 subfamily. As to quaternary structure, homodimer.

The protein localises to the cytoplasm. It catalyses the reaction tRNA(Tyr) + L-tyrosine + ATP = L-tyrosyl-tRNA(Tyr) + AMP + diphosphate + H(+). Catalyzes the attachment of tyrosine to tRNA(Tyr) in a two-step reaction: tyrosine is first activated by ATP to form Tyr-AMP and then transferred to the acceptor end of tRNA(Tyr). This Francisella tularensis subsp. tularensis (strain SCHU S4 / Schu 4) protein is Tyrosine--tRNA ligase.